Reading from the N-terminus, the 867-residue chain is Protein translocase subunit SecA 1 (867 aa).

Residues Gln-86, Gly-104–Thr-108, and Asp-493 each bind ATP.

This sequence belongs to the SecA family. As to quaternary structure, monomer and homodimer. Part of the essential Sec protein translocation apparatus which comprises SecA, SecYEG and auxiliary proteins SecDF. Other proteins may also be involved.

The protein resides in the cell membrane. It is found in the cytoplasm. It catalyses the reaction ATP + H2O + cellular proteinSide 1 = ADP + phosphate + cellular proteinSide 2.. Its function is as follows. Part of the Sec protein translocase complex. Interacts with the SecYEG preprotein conducting channel. Has a central role in coupling the hydrolysis of ATP to the transfer of proteins into and across the cell membrane, serving as an ATP-driven molecular motor driving the stepwise translocation of polypeptide chains across the membrane. In Corynebacterium jeikeium (strain K411), this protein is Protein translocase subunit SecA 1.